We begin with the raw amino-acid sequence, 948 residues long: Alanine--tRNA ligase (948 aa).

The Zn(2+) site is built by H638, H642, C739, and H743.

This sequence belongs to the class-II aminoacyl-tRNA synthetase family. Zn(2+) is required as a cofactor.

It is found in the cytoplasm. The enzyme catalyses tRNA(Ala) + L-alanine + ATP = L-alanyl-tRNA(Ala) + AMP + diphosphate. Catalyzes the attachment of alanine to tRNA(Ala) in a two-step reaction: alanine is first activated by ATP to form Ala-AMP and then transferred to the acceptor end of tRNA(Ala). Also edits incorrectly charged Ser-tRNA(Ala) and Gly-tRNA(Ala) via its editing domain. In Paracidovorax citrulli (strain AAC00-1) (Acidovorax citrulli), this protein is Alanine--tRNA ligase.